A 301-amino-acid polypeptide reads, in one-letter code: 2-dehydropantoate 2-reductase (301 aa).

Residues 7–12, lysine 74, asparagine 99, and alanine 123 each bind NADP(+); that span reads GAGAIG. Residue lysine 179 is the Proton donor of the active site. Substrate-binding positions include lysine 179, asparagine 183, asparagine 187, asparagine 197, and 246–249; that span reads NYNS. Glutamate 261 serves as a coordination point for NADP(+).

It belongs to the ketopantoate reductase family.

The protein localises to the cytoplasm. The enzyme catalyses (R)-pantoate + NAD(+) = 2-dehydropantoate + NADH + H(+). It carries out the reaction (R)-pantoate + NADP(+) = 2-dehydropantoate + NADPH + H(+). It functions in the pathway cofactor biosynthesis; coenzyme A biosynthesis. Its function is as follows. Catalyzes the NAD(P)H-dependent reduction of ketopantoate into pantoic acid. This Pyrococcus horikoshii (strain ATCC 700860 / DSM 12428 / JCM 9974 / NBRC 100139 / OT-3) protein is 2-dehydropantoate 2-reductase.